The sequence spans 205 residues: Thiamine-phosphate synthase (205 aa).

4-amino-2-methyl-5-(diphosphooxymethyl)pyrimidine is bound by residues 35–39 and Asn67; that span reads QYRDK. Mg(2+) is bound by residues Asp68 and Asp86. Thr105 lines the 4-amino-2-methyl-5-(diphosphooxymethyl)pyrimidine pocket. 132 to 134 contributes to the 2-[(2R,5Z)-2-carboxy-4-methylthiazol-5(2H)-ylidene]ethyl phosphate binding site; the sequence is SLT. Lys135 contacts 4-amino-2-methyl-5-(diphosphooxymethyl)pyrimidine. Residue Gly162 coordinates 2-[(2R,5Z)-2-carboxy-4-methylthiazol-5(2H)-ylidene]ethyl phosphate.

It belongs to the thiamine-phosphate synthase family. Mg(2+) serves as cofactor.

It catalyses the reaction 2-[(2R,5Z)-2-carboxy-4-methylthiazol-5(2H)-ylidene]ethyl phosphate + 4-amino-2-methyl-5-(diphosphooxymethyl)pyrimidine + 2 H(+) = thiamine phosphate + CO2 + diphosphate. The catalysed reaction is 2-(2-carboxy-4-methylthiazol-5-yl)ethyl phosphate + 4-amino-2-methyl-5-(diphosphooxymethyl)pyrimidine + 2 H(+) = thiamine phosphate + CO2 + diphosphate. It carries out the reaction 4-methyl-5-(2-phosphooxyethyl)-thiazole + 4-amino-2-methyl-5-(diphosphooxymethyl)pyrimidine + H(+) = thiamine phosphate + diphosphate. It functions in the pathway cofactor biosynthesis; thiamine diphosphate biosynthesis; thiamine phosphate from 4-amino-2-methyl-5-diphosphomethylpyrimidine and 4-methyl-5-(2-phosphoethyl)-thiazole: step 1/1. In terms of biological role, condenses 4-methyl-5-(beta-hydroxyethyl)thiazole monophosphate (THZ-P) and 2-methyl-4-amino-5-hydroxymethyl pyrimidine pyrophosphate (HMP-PP) to form thiamine monophosphate (TMP). The chain is Thiamine-phosphate synthase from Pseudomonas syringae pv. syringae (strain B728a).